We begin with the raw amino-acid sequence, 206 residues long: Transmembrane emp24 domain-containing protein bai (206 aa).

The signal sequence occupies residues 1 to 20 (MLKSLLCILLIFGCLCRIHG). Topologically, residues 21–172 (VMFHLTPNTQ…RDTNEKTNSR (152 aa)) are lumenal. The GOLD domain maps to 30-140 (QKCLKEDIQA…LKPLEVDLKR (111 aa)). A helical membrane pass occupies residues 173–193 (VLFFSIFSMCCLLGLATWQVL). Over 194–206 (YLRRYFKAKKLIE) the chain is Cytoplasmic.

This sequence belongs to the EMP24/GP25L family.

It is found in the membrane. Eca and bai are essential, though not redundant, for dorsoventral patterning of the embryo. Specifically required during early embryogenesis for the activity of maternal tkv, while the zygotic tkv is not affected. This chain is Transmembrane emp24 domain-containing protein bai, found in Drosophila grimshawi (Hawaiian fruit fly).